A 125-amino-acid chain; its full sequence is Small ribosomal subunit protein uS13 (125 aa).

It belongs to the universal ribosomal protein uS13 family. In terms of assembly, part of the 30S ribosomal subunit. Forms a loose heterodimer with protein S19. Forms two bridges to the 50S subunit in the 70S ribosome.

Its function is as follows. Located at the top of the head of the 30S subunit, it contacts several helices of the 16S rRNA. In the 70S ribosome it contacts the 23S rRNA (bridge B1a) and protein L5 of the 50S subunit (bridge B1b), connecting the 2 subunits; these bridges are implicated in subunit movement. Contacts the tRNAs in the A and P-sites. The protein is Small ribosomal subunit protein uS13 of Rickettsia africae (strain ESF-5).